Reading from the N-terminus, the 400-residue chain is CCA-adding enzyme (400 aa).

Residues glycine 28 and arginine 31 each coordinate ATP. Residues glycine 28 and arginine 31 each contribute to the CTP site. Mg(2+)-binding residues include aspartate 41 and aspartate 43. ATP-binding residues include arginine 112, aspartate 155, arginine 158, arginine 161, and arginine 164. Residues arginine 112, aspartate 155, arginine 158, arginine 161, and arginine 164 each contribute to the CTP site.

This sequence belongs to the tRNA nucleotidyltransferase/poly(A) polymerase family. Bacterial CCA-adding enzyme type 3 subfamily. As to quaternary structure, homodimer. The cofactor is Mg(2+).

It carries out the reaction a tRNA precursor + 2 CTP + ATP = a tRNA with a 3' CCA end + 3 diphosphate. The enzyme catalyses a tRNA with a 3' CCA end + 2 CTP + ATP = a tRNA with a 3' CCACCA end + 3 diphosphate. Its function is as follows. Catalyzes the addition and repair of the essential 3'-terminal CCA sequence in tRNAs without using a nucleic acid template. Adds these three nucleotides in the order of C, C, and A to the tRNA nucleotide-73, using CTP and ATP as substrates and producing inorganic pyrophosphate. tRNA 3'-terminal CCA addition is required both for tRNA processing and repair. Also involved in tRNA surveillance by mediating tandem CCA addition to generate a CCACCA at the 3' terminus of unstable tRNAs. While stable tRNAs receive only 3'-terminal CCA, unstable tRNAs are marked with CCACCA and rapidly degraded. The sequence is that of CCA-adding enzyme from Staphylococcus aureus (strain COL).